The chain runs to 312 residues: Putative ring-cleaving dioxygenase MhqO (312 aa).

2 VOC domains span residues Gly-7–Arg-131 and Gly-152–Asp-269. Fe cation contacts are provided by His-10, His-217, and Glu-265.

It belongs to the extradiol ring-cleavage dioxygenase family. Fe(2+) serves as cofactor.

It is found in the cytoplasm. Putative ring-cleavage dioxygenase that may contribute to the degradation of aromatic compounds. This chain is Putative ring-cleaving dioxygenase MhqO (mhqO), found in Bacillus subtilis (strain 168).